The primary structure comprises 225 residues: Sirohydrochlorin ferrochelatase, chloroplastic (225 aa).

The N-terminal 46 residues, 1–46 (MTTQSQFLVNLSYGGLASQSNLRANNRVSPSSCQITRTNRSWALPV), are a transit peptide targeting the chloroplast. Residues His89 and His155 each coordinate Fe cation. [4Fe-4S] cluster-binding residues include Cys199, Cys210, Cys213, and Cys219.

Belongs to the CbiX family. SirB subfamily. As to quaternary structure, homodimer. It depends on [4Fe-4S] cluster as a cofactor.

The protein localises to the plastid. The protein resides in the chloroplast. It catalyses the reaction siroheme + 2 H(+) = sirohydrochlorin + Fe(2+). It functions in the pathway porphyrin-containing compound metabolism; siroheme biosynthesis; siroheme from sirohydrochlorin: step 1/1. Its function is as follows. Chelates iron to the siroheme precursor. Catalyzes the last step of the siroheme biosynthesis. Unlike its counterparts in bacteria, contains an [Fe-S] cluster which is not involved directly in the enzymatic reaction, but may play regulatory role in iron, sulfur and tetrapyrrole metabolism. The [Fe-S] cluster is required for normal plant growth. The chain is Sirohydrochlorin ferrochelatase, chloroplastic from Arabidopsis thaliana (Mouse-ear cress).